Reading from the N-terminus, the 833-residue chain is Leucine--tRNA ligase (833 aa).

Residues 41–52 carry the 'HIGH' region motif; it reads PYPSGAGLHVGH. The 'KMSKS' region motif lies at 610–614; the sequence is KMSKS. Lys-613 serves as a coordination point for ATP.

It belongs to the class-I aminoacyl-tRNA synthetase family.

Its subcellular location is the cytoplasm. The catalysed reaction is tRNA(Leu) + L-leucine + ATP = L-leucyl-tRNA(Leu) + AMP + diphosphate. This chain is Leucine--tRNA ligase, found in Streptococcus pyogenes serotype M5 (strain Manfredo).